We begin with the raw amino-acid sequence, 113 residues long: uncharacterized protein (113 aa).

This is an uncharacterized protein from Ureaplasma parvum serovar 3 (strain ATCC 700970).